Consider the following 1178-residue polypeptide: Leucine--tRNA ligase, cytoplasmic (1178 aa).

L-leucine contacts are provided by Tyr54 and Tyr56. The short motif at 62–65 (HLGH) is the 'HIGH' region element. Ser169 is subject to Phosphoserine. The segment at 262-511 (GPQEYTLVKL…DAGDALIYME (250 aa)) is editing domain. L-leucine-binding residues include Leu596 and Ser599. A 'KMSKS' region motif is present at residues 718 to 722 (KMSKS). Lys721 provides a ligand contact to ATP. Ser722 bears the Phosphoserine mark. N6-acetyllysine is present on residues Lys972 and Lys1049.

Belongs to the class-I aminoacyl-tRNA synthetase family.

It is found in the cytoplasm. It carries out the reaction tRNA(Leu) + L-leucine + ATP = L-leucyl-tRNA(Leu) + AMP + diphosphate. It catalyses the reaction L-methionyl-tRNA(Leu) + H2O = tRNA(Leu) + L-methionine + H(+). Its activity is regulated as follows. 5-fluoro-1,3-dihydro-1-hydroxy-1,2-benzoxaborole inhibits LARS1 by forming a covalent adduct with the 3' adenosine of tRNA(Leu) at the editing site, thus locking the enzyme in an inactive conformation. In terms of biological role, aminoacyl-tRNA synthetase that catalyzes the specific attachment of leucine to its cognate tRNA (tRNA(Leu)). It performs tRNA aminoacylation in a two-step reaction: Leu is initially activated by ATP to form a leucyl-adenylate (Leu-AMP) intermediate; then the leucyl moiety is transferred to the acceptor 3' end of the tRNA to yield leucyl-tRNA. To improve the fidelity of catalytic reactions, it is also able to hydrolyze misactivated aminoacyl-adenylate intermediates (pre-transfer editing) and mischarged aminoacyl-tRNAs (post-transfer editing). This chain is Leucine--tRNA ligase, cytoplasmic (Lars1), found in Mus musculus (Mouse).